The chain runs to 417 residues: Tryptophan synthase beta chain (417 aa).

Residue lysine 110 is modified to N6-(pyridoxal phosphate)lysine.

It belongs to the TrpB family. As to quaternary structure, tetramer of two alpha and two beta chains. It depends on pyridoxal 5'-phosphate as a cofactor.

It carries out the reaction (1S,2R)-1-C-(indol-3-yl)glycerol 3-phosphate + L-serine = D-glyceraldehyde 3-phosphate + L-tryptophan + H2O. Its pathway is amino-acid biosynthesis; L-tryptophan biosynthesis; L-tryptophan from chorismate: step 5/5. In terms of biological role, the beta subunit is responsible for the synthesis of L-tryptophan from indole and L-serine. In Prochlorococcus marinus (strain NATL1A), this protein is Tryptophan synthase beta chain.